The following is a 303-amino-acid chain: Diaminopimelate epimerase (303 aa).

Positions 15, 47, and 67 each coordinate substrate. Catalysis depends on Cys76, which acts as the Proton donor. Residues Gly77–Asn78, Asn163, Asn197, and Glu215–Arg216 each bind substrate. Cys224 functions as the Proton acceptor in the catalytic mechanism. A substrate-binding site is contributed by Gly225–Ser226.

It belongs to the diaminopimelate epimerase family. As to quaternary structure, homodimer.

It localises to the cytoplasm. The enzyme catalyses (2S,6S)-2,6-diaminopimelate = meso-2,6-diaminopimelate. It participates in amino-acid biosynthesis; L-lysine biosynthesis via DAP pathway; DL-2,6-diaminopimelate from LL-2,6-diaminopimelate: step 1/1. In terms of biological role, catalyzes the stereoinversion of LL-2,6-diaminopimelate (L,L-DAP) to meso-diaminopimelate (meso-DAP), a precursor of L-lysine and an essential component of the bacterial peptidoglycan. The protein is Diaminopimelate epimerase of Allorhizobium ampelinum (strain ATCC BAA-846 / DSM 112012 / S4) (Agrobacterium vitis (strain S4)).